We begin with the raw amino-acid sequence, 162 residues long: uncharacterized protein (162 aa).

This is an uncharacterized protein from Sputnik virophage.